A 389-amino-acid polypeptide reads, in one-letter code: Sterol methyltransferase-like 1 (389 aa).

A helical membrane pass occupies residues 25-45; the sequence is IAAGVTAAVVIGGYIWIITEL.

The protein belongs to the class I-like SAM-binding methyltransferase superfamily. Erg6/SMT family.

The protein resides in the microsome membrane. Its function is as follows. Unable to convert squalene, botryococcene, cycloartenol, zymosterol or lanosterol to mono-, di-, tri- or tetramethylated derivatives. This chain is Sterol methyltransferase-like 1 (SMT-1), found in Botryococcus braunii (Green alga).